A 448-amino-acid polypeptide reads, in one-letter code: Adenylosuccinate synthetase (448 aa).

GTP-binding positions include 36–42 (GDEGKGK) and 64–66 (GHT). Asp37 functions as the Proton acceptor in the catalytic mechanism. Asp37 and Gly64 together coordinate Mg(2+). IMP contacts are provided by residues 37 to 40 (DEGK), 62 to 65 (NAGH), Thr154, Arg168, Asn246, Thr261, and Arg325. His65 serves as the catalytic Proton donor. Position 321-327 (321-327 (VTTKRKR)) interacts with substrate. GTP is bound by residues Arg327, 353-355 (KLD), and 436-438 (GVG).

Belongs to the adenylosuccinate synthetase family. In terms of assembly, homodimer. It depends on Mg(2+) as a cofactor.

The protein resides in the cytoplasm. The catalysed reaction is IMP + L-aspartate + GTP = N(6)-(1,2-dicarboxyethyl)-AMP + GDP + phosphate + 2 H(+). It participates in purine metabolism; AMP biosynthesis via de novo pathway; AMP from IMP: step 1/2. Its function is as follows. Plays an important role in the de novo pathway and in the salvage pathway of purine nucleotide biosynthesis. Catalyzes the first committed step in the biosynthesis of AMP from IMP. The chain is Adenylosuccinate synthetase from Drosophila persimilis (Fruit fly).